Reading from the N-terminus, the 338-residue chain is Isopenicillin N synthase (338 aa).

R89, Y93, S185, and Y191 together coordinate isopenicillin N. Positions 89, 93, 185, 191, 216, and 218 each coordinate N-[(5S)-5-amino-5-carboxypentanoyl]-L-cysteinyl-D-valine. Positions 182 to 290 (TLSSVVLIRY…RQSLPFFVNL (109 aa)) constitute a Fe2OG dioxygenase domain. Positions 216, 218, and 272 each coordinate Fe(2+). Residue R281 participates in 2-oxoglutarate binding. S283 serves as a coordination point for isopenicillin N. S283 is an N-[(5S)-5-amino-5-carboxypentanoyl]-L-cysteinyl-D-valine binding site.

It belongs to the iron/ascorbate-dependent oxidoreductase family. Monomer. Requires Fe(2+) as cofactor.

Its subcellular location is the cytoplasm. It localises to the cytosol. The enzyme catalyses N-[(5S)-5-amino-5-carboxypentanoyl]-L-cysteinyl-D-valine + O2 = isopenicillin N + 2 H2O. It functions in the pathway antibiotic biosynthesis; penicillin G biosynthesis; penicillin G from L-alpha-aminoadipate and L-cysteine and L-valine: step 2/3. Isopenicillin N synthase; part of the gene cluster that mediates the biosynthesis of penicillin, the world's most important antibiotic. IpnA catalyzes the cyclization of the tripeptide N-[(5S)-5-amino-5-carboxypentanoyl]-L-cysteinyl-D-valine (LLD-ACV or ACV) to form isopenicillin N (IPN) that contains the beta-lactam nucleus. The penicillin biosynthesis occurs via 3 enzymatic steps, the first corresponding to the production of the tripeptide N-[(5S)-5-amino-5-carboxypentanoyl]-L-cysteinyl-D-valine (LLD-ACV or ACV) by the NRPS pcbAB. The tripeptide ACV is then cyclized to isopenicillin N (IPN) by the isopenicillin N synthase pcbC that forms the beta-lactam nucleus. Finally, the alpha-aminoadipyl side chain is exchanged for phenylacetic acid by the isopenicillin N acyltransferase penDE to yield penicillin in the peroxisomal matrix. The protein is Isopenicillin N synthase (PCBC) of Hapsidospora chrysogena (Acremonium chrysogenum).